The primary structure comprises 427 residues: Indole diterpene prenyltransferase idtF (427 aa).

Residues Arg-97, Lys-195, Arg-264, Lys-266, Tyr-268, and Tyr-352 each coordinate substrate.

The protein belongs to the tryptophan dimethylallyltransferase family.

It functions in the pathway secondary metabolite biosynthesis. Its function is as follows. Indole diterpene prenyltransferase; part of the gene cluster that mediates the biosynthesis of paspalitrems, indole-diterpene (IDT) mycotoxins that are potent tremorgens in mammals. The geranylgeranyl diphosphate (GGPP) synthase idtG is proposed to catalyze the first step in IDT biosynthesis via catalysis of a series of iterative condensations of isopentenyl diphosphate (IPP) with dimethylallyl diphosphate (DMAPP), geranyl diphosphate (GPP), and farnesyl diphosphate (FPP), to form GGPP. Condensation of indole-3-glycerol phosphate with GGPP by the prenyltransferase idtC then forms 3-geranylgeranylindole (3-GGI). Epoxidation of the two terminal alkenes of the geranylgeranyl moiety by the FAD-dependent monooxygenase idtM, and cyclization by the terpene cyclase idtB then leads to the production of paspaline. The cytochrome P450 monooxygenase idtP then catalyzes oxidative elimination of the pendant methyl group at C-12 of paspaline and generates the C-10 ketone to yield 13-desoxypaxilline. The cytochrome P450 monooxygenase idtQ may catalyze the C-13 oxidation of 13-desoxypaxilline to afford paxilline. Considering that both paspalicine and paxilline were detected in C.paspali, idtQ also catalyzes the formation of paspalinine from 13-desoxypaxilline via paspalicine as an intermediate. Finally, the alpha-prenyltransferase idtF prenylates paspalinine at the C-20 or the C-21 positions to yield paspalitrems A and C, respectively. The hydroxylation of paspalitrem A at C-32 by a still unknown oxidase affords paspalitrem B. This is Indole diterpene prenyltransferase idtF from Claviceps paspali (Rye ergot fungus).